A 154-amino-acid chain; its full sequence is Methylglyoxal synthase (154 aa).

Residues 6–154 form the MGS-like domain; the sequence is QSLPAKKNIA…KYLATRQIDI (149 aa). Substrate contacts are provided by residues His-19, Lys-23, 45–48, and 65–66; these read TGTT and SG. Residue Asp-71 is the Proton donor/acceptor of the active site. His-98 provides a ligand contact to substrate.

This sequence belongs to the methylglyoxal synthase family.

The enzyme catalyses dihydroxyacetone phosphate = methylglyoxal + phosphate. Catalyzes the formation of methylglyoxal from dihydroxyacetone phosphate. This chain is Methylglyoxal synthase, found in Pseudoalteromonas translucida (strain TAC 125).